Reading from the N-terminus, the 185-residue chain is Large ribosomal subunit protein uL5 (185 aa).

This sequence belongs to the universal ribosomal protein uL5 family. In terms of assembly, part of the 50S ribosomal subunit; part of the 5S rRNA/L5/L18/L25 subcomplex. Contacts the 5S rRNA and the P site tRNA. Forms a bridge to the 30S subunit in the 70S ribosome.

This is one of the proteins that bind and probably mediate the attachment of the 5S RNA into the large ribosomal subunit, where it forms part of the central protuberance. In the 70S ribosome it contacts protein S13 of the 30S subunit (bridge B1b), connecting the 2 subunits; this bridge is implicated in subunit movement. Contacts the P site tRNA; the 5S rRNA and some of its associated proteins might help stabilize positioning of ribosome-bound tRNAs. This chain is Large ribosomal subunit protein uL5, found in Xanthobacter autotrophicus (strain ATCC BAA-1158 / Py2).